The following is a 269-amino-acid chain: Regulatory protein RecX (269 aa).

It belongs to the RecX family.

It localises to the cytoplasm. Modulates RecA activity. This Lactococcus lactis subsp. cremoris (strain SK11) protein is Regulatory protein RecX.